Consider the following 180-residue polypeptide: 2-oxoglutarate dehydrogenase, mitochondrial (180 aa).

The residue at position 14 (Lys14) is an N6-succinyllysine. Ser40 bears the Phosphoserine mark. Arg64 provides a ligand contact to thiamine diphosphate.

Belongs to the alpha-ketoglutarate dehydrogenase family. As to quaternary structure, homodimer. The 2-oxoglutarate dehydrogenase complex is composed of OGDH (2-oxoglutarate dehydrogenase; E1), DLST (dihydrolipoamide succinyltransferase; E2) and DLD (dihydrolipoamide dehydrogenase; E3). It contains multiple copies of the three enzymatic components (E1, E2 and E3). In the nucleus, the 2-oxoglutarate dehydrogenase complex associates with KAT2A. Interacts with ABHD11; this interaction maintains the functional lipoylation of the 2-oxoglutarate dehydrogenase complex. The cofactor is thiamine diphosphate. It depends on Mg(2+) as a cofactor.

Its subcellular location is the mitochondrion matrix. The protein resides in the nucleus. The catalysed reaction is N(6)-[(R)-lipoyl]-L-lysyl-[protein] + 2-oxoglutarate + H(+) = N(6)-[(R)-S(8)-succinyldihydrolipoyl]-L-lysyl-[protein] + CO2. With respect to regulation, calcium ions and ADP stimulate, whereas ATP and NADH reduce catalytic activity. Functionally, 2-oxoglutarate dehydrogenase (E1) component of the 2-oxoglutarate dehydrogenase complex (OGDHC), which mediates the decarboxylation of alpha-ketoglutarate. The 2-oxoglutarate dehydrogenase complex catalyzes the overall conversion of 2-oxoglutarate to succinyl-CoA and CO(2). The 2-oxoglutarate dehydrogenase complex is mainly active in the mitochondrion. A fraction of the 2-oxoglutarate dehydrogenase complex also localizes in the nucleus and is required for lysine succinylation of histones: associates with KAT2A on chromatin and provides succinyl-CoA to histone succinyltransferase KAT2A. The sequence is that of 2-oxoglutarate dehydrogenase, mitochondrial from Mesocricetus auratus (Golden hamster).